The chain runs to 165 residues: Glycine cleavage system H protein, mitochondrial (165 aa).

A Lipoyl-binding domain is found at 57 to 139 (NAIVGISSYA…YEKGWLFKVD (83 aa)). The residue at position 98 (K98) is an N6-lipoyllysine.

The protein belongs to the GcvH family. In terms of assembly, the glycine cleavage system is composed of four proteins: P, T, L and H. (R)-lipoate serves as cofactor.

It is found in the mitochondrion. In terms of biological role, the glycine cleavage system catalyzes the degradation of glycine. The H protein shuttles the methylamine group of glycine from the P protein to the T protein. The chain is Glycine cleavage system H protein, mitochondrial (ppl) from Drosophila melanogaster (Fruit fly).